A 21-amino-acid polypeptide reads, in one-letter code: Putative NADH dehydrogenase subunit PS9 (21 aa).

In Pinus strobus (Eastern white pine), this protein is Putative NADH dehydrogenase subunit PS9.